Consider the following 306-residue polypeptide: Ornithine carbamoyltransferase (306 aa).

Residues 54–57 (STRT), Q81, R105, and 132–135 (HPLQ) contribute to the carbamoyl phosphate site. Residues N162, D226, and 230 to 231 (SM) each bind L-ornithine. Residues 266 to 267 (CL) and R294 each bind carbamoyl phosphate.

It belongs to the aspartate/ornithine carbamoyltransferase superfamily. OTCase family.

It is found in the cytoplasm. It carries out the reaction carbamoyl phosphate + L-ornithine = L-citrulline + phosphate + H(+). Its pathway is amino-acid biosynthesis; L-arginine biosynthesis; L-arginine from L-ornithine and carbamoyl phosphate: step 1/3. Reversibly catalyzes the transfer of the carbamoyl group from carbamoyl phosphate (CP) to the N(epsilon) atom of ornithine (ORN) to produce L-citrulline. In Sulfurisphaera tokodaii (strain DSM 16993 / JCM 10545 / NBRC 100140 / 7) (Sulfolobus tokodaii), this protein is Ornithine carbamoyltransferase.